A 170-amino-acid chain; its full sequence is Allophycocyanin subunit beta-18 (170 aa).

Asn74 carries the post-translational modification N4-methylasparagine. Cys84 provides a ligand contact to (2R,3E)-phycocyanobilin.

Belongs to the phycobiliprotein family. Heterodimer of an alpha and a beta chain. Contains one covalently linked bilin chromophore.

The protein localises to the plastid. It localises to the chloroplast thylakoid membrane. Its function is as follows. Light-harvesting photosynthetic bile pigment-protein from the phycobiliprotein complex. Allophycocyanin has a maximum absorption at approximately 650 nanometers. In Cyanidium caldarium (Red alga), this protein is Allophycocyanin subunit beta-18 (apcF).